Consider the following 251-residue polypeptide: Triosephosphate isomerase (251 aa).

9–11 is a substrate binding site; the sequence is NWK. The Electrophile role is filled by H95. E167 (proton acceptor) is an active-site residue. Substrate-binding positions include G173, S213, and 234–235; that span reads GG. Residue S213 is modified to Phosphoserine.

It belongs to the triosephosphate isomerase family. As to quaternary structure, homodimer.

Its subcellular location is the cytoplasm. It catalyses the reaction D-glyceraldehyde 3-phosphate = dihydroxyacetone phosphate. It functions in the pathway carbohydrate biosynthesis; gluconeogenesis. The protein operates within carbohydrate degradation; glycolysis; D-glyceraldehyde 3-phosphate from glycerone phosphate: step 1/1. Functionally, involved in the gluconeogenesis. Catalyzes stereospecifically the conversion of dihydroxyacetone phosphate (DHAP) to D-glyceraldehyde-3-phosphate (G3P). This chain is Triosephosphate isomerase, found in Bacillus cytotoxicus (strain DSM 22905 / CIP 110041 / 391-98 / NVH 391-98).